A 58-amino-acid polypeptide reads, in one-letter code: Large ribosomal subunit protein uL30 (58 aa).

This sequence belongs to the universal ribosomal protein uL30 family. Part of the 50S ribosomal subunit.

This is Large ribosomal subunit protein uL30 from Bacteroides thetaiotaomicron (strain ATCC 29148 / DSM 2079 / JCM 5827 / CCUG 10774 / NCTC 10582 / VPI-5482 / E50).